We begin with the raw amino-acid sequence, 320 residues long: Olfactory receptor 2C3 (320 aa).

The Extracellular portion of the chain corresponds to 1–26 (MMEIANVSSPEVFVLLGFSTRPSLET). Asn6 is a glycosylation site (N-linked (GlcNAc...) asparagine). Residues 27 to 50 (VLFIVVLSFYMVSILGNGIIILVS) traverse the membrane as a helical segment. Residues 51–58 (HTDVHLHT) are Cytoplasmic-facing. Residues 59-80 (PMYFFLANLPFLDMSFTTSIVP) form a helical membrane-spanning segment. At 81–101 (QLLANLWGPQKTISYGGCVVQ) the chain is on the extracellular side. An intrachain disulfide couples Cys98 to Cys190. A helical membrane pass occupies residues 102–121 (FYISHWLGATECVLLATMSY). Topologically, residues 122–140 (DRYAAICRPLHYTVIMHPQ) are cytoplasmic. A helical transmembrane segment spans residues 141-159 (LCLGLALASWLGGLTTSMV). Over 160–196 (GSTLTMLLPLCGNNCIDHFFCEMPLIMQLACVDTSLN) the chain is Extracellular. The chain crosses the membrane as a helical span at residues 197–220 (EMEMYLASFVFVVLPLGLILVSYG). The Cytoplasmic segment spans residues 221–237 (HIARAVLKIRSAEGRRK). The helical transmembrane segment at 238-260 (AFNTCSSHVAVVSLFYGSIIFMY) threads the bilayer. Residues 261 to 273 (LQPAKSTSHEQGK) lie on the Extracellular side of the membrane. Residues 274 to 293 (FIALFYTVVTPALNPLIYTL) traverse the membrane as a helical segment. Topologically, residues 294–320 (RNTEVKSALRHMVLENCCGSAGKLAQI) are cytoplasmic.

Belongs to the G-protein coupled receptor 1 family.

The protein resides in the cell membrane. In terms of biological role, odorant receptor. The protein is Olfactory receptor 2C3 (OR2C3) of Homo sapiens (Human).